The primary structure comprises 93 residues: Phosphoribosyl-ATP pyrophosphatase (93 aa).

The protein belongs to the PRA-PH family.

The protein resides in the cytoplasm. The catalysed reaction is 1-(5-phospho-beta-D-ribosyl)-ATP + H2O = 1-(5-phospho-beta-D-ribosyl)-5'-AMP + diphosphate + H(+). It functions in the pathway amino-acid biosynthesis; L-histidine biosynthesis; L-histidine from 5-phospho-alpha-D-ribose 1-diphosphate: step 2/9. This Metallosphaera sedula (strain ATCC 51363 / DSM 5348 / JCM 9185 / NBRC 15509 / TH2) protein is Phosphoribosyl-ATP pyrophosphatase.